The following is a 54-amino-acid chain: Photosystem II reaction center protein K (54 aa).

A propeptide spanning residues 1–17 (MSFITLNNFFNTNTFFG) is cleaved from the precursor. The chain crosses the membrane as a helical span at residues 29–49 (LIDVLPIIPVLFFLLAFVWQA).

It belongs to the PsbK family. As to quaternary structure, PSII is composed of 1 copy each of membrane proteins PsbA, PsbB, PsbC, PsbD, PsbE, PsbF, PsbH, PsbI, PsbJ, PsbK, PsbL, PsbM, PsbT, PsbY, PsbZ, Psb30/Ycf12, at least 3 peripheral proteins of the oxygen-evolving complex and a large number of cofactors. It forms dimeric complexes.

Its subcellular location is the plastid. It is found in the chloroplast thylakoid membrane. In terms of biological role, one of the components of the core complex of photosystem II (PSII). PSII is a light-driven water:plastoquinone oxidoreductase that uses light energy to abstract electrons from H(2)O, generating O(2) and a proton gradient subsequently used for ATP formation. It consists of a core antenna complex that captures photons, and an electron transfer chain that converts photonic excitation into a charge separation. The chain is Photosystem II reaction center protein K from Euglena gracilis.